The following is a 625-amino-acid chain: 1-deoxy-D-xylulose-5-phosphate synthase (625 aa).

Residues His-80 and 121–123 (GHS) contribute to the thiamine diphosphate site. Asp-152 lines the Mg(2+) pocket. Thiamine diphosphate contacts are provided by residues 153-154 (GA), Asn-181, Tyr-290, and Glu-371. Mg(2+) is bound at residue Asn-181.

It belongs to the transketolase family. DXPS subfamily. In terms of assembly, homodimer. Mg(2+) serves as cofactor. The cofactor is thiamine diphosphate.

The catalysed reaction is D-glyceraldehyde 3-phosphate + pyruvate + H(+) = 1-deoxy-D-xylulose 5-phosphate + CO2. It functions in the pathway metabolic intermediate biosynthesis; 1-deoxy-D-xylulose 5-phosphate biosynthesis; 1-deoxy-D-xylulose 5-phosphate from D-glyceraldehyde 3-phosphate and pyruvate: step 1/1. Catalyzes the acyloin condensation reaction between C atoms 2 and 3 of pyruvate and glyceraldehyde 3-phosphate to yield 1-deoxy-D-xylulose-5-phosphate (DXP). In Haemophilus influenzae (strain ATCC 51907 / DSM 11121 / KW20 / Rd), this protein is 1-deoxy-D-xylulose-5-phosphate synthase.